Reading from the N-terminus, the 485-residue chain is Glutamyl-tRNA(Gln) amidotransferase subunit A (485 aa).

Active-site charge relay system residues include lysine 79 and serine 154. Serine 178 functions as the Acyl-ester intermediate in the catalytic mechanism.

The protein belongs to the amidase family. GatA subfamily. Heterotrimer of A, B and C subunits.

It carries out the reaction L-glutamyl-tRNA(Gln) + L-glutamine + ATP + H2O = L-glutaminyl-tRNA(Gln) + L-glutamate + ADP + phosphate + H(+). Functionally, allows the formation of correctly charged Gln-tRNA(Gln) through the transamidation of misacylated Glu-tRNA(Gln) in organisms which lack glutaminyl-tRNA synthetase. The reaction takes place in the presence of glutamine and ATP through an activated gamma-phospho-Glu-tRNA(Gln). The protein is Glutamyl-tRNA(Gln) amidotransferase subunit A of Staphylococcus haemolyticus (strain JCSC1435).